The primary structure comprises 598 residues: Insulin-like growth factor 2 mRNA-binding protein 1 (598 aa).

RRM domains follow at residues 2-75 (NKLY…HSVP) and 81-156 (RKLQ…YIPD). The segment at 155–195 (PDENSEVDSQRGPDNGRRPGYGPRGTSRQMSPGSGIPSKHQ) is disordered. Positions 162 to 171 (DSQRGPDNGR) are enriched in basic and acidic residues. A Phosphoserine modification is found at serine 185. 2 consecutive KH domains span residues 198 to 263 (DIPL…CRMI) and 279 to 346 (EVPL…EQEI). Tyrosine 399 is subject to Phosphotyrosine. KH domains are found at residues 407–472 (QETV…QGRI) and 489–555 (KLET…QRKI). Residues 561 to 598 (QVKQQQKGGGMGTPQGPHPQGMTELGSPQGLAQEPRRK) form a disordered region. A phosphothreonine mark is found at threonine 573 and threonine 583. A compositionally biased stretch (low complexity) spans 574–583 (PQGPHPQGMT). The residue at position 587 (serine 587) is a Phosphoserine.

This sequence belongs to the RRM IMP/VICKZ family. As to quaternary structure, component of the CRD-mediated complex.

Its subcellular location is the nucleus. It localises to the cytoplasm. The protein resides in the perinuclear region. It is found in the P-body. The protein localises to the stress granule. Its subcellular location is the cell projection. It localises to the growth cone. The protein resides in the filopodium. It is found in the lamellipodium. Functionally, RNA-binding factor that recruits target transcripts to cytoplasmic protein-RNA complexes (mRNPs). This transcript 'caging' into mRNPs allows mRNA transport and transient storage. It also modulates the rate and location at which target transcripts encounter the translational apparatus and shields them from endonuclease attacks or microRNA-mediated degradation. Preferentially binds to N6-methyladenosine (m6A)-containing mRNAs and increases their stability. Plays a direct role in the transport and translation of transcripts required for axonal regeneration in adult sensory neurons. Regulates localized beta-actin/ACTB mRNA translation in polarized cells, a crucial process for cell migration and neurite outgrowth. Promotes the directed movement of cells by fine-tuning intracellular signaling networks and enhances the velocity of cell migration. The sequence is that of Insulin-like growth factor 2 mRNA-binding protein 1 (igf2bp1) from Danio rerio (Zebrafish).